The chain runs to 689 residues: Elongation factor G (689 aa).

Residues 8-282 (LNTRNIGIMA…AVVDYLPSPL (275 aa)) enclose the tr-type G domain. GTP contacts are provided by residues 17–24 (AHIDAGKT), 81–85 (DTPGH), and 135–138 (NKMD).

Belongs to the TRAFAC class translation factor GTPase superfamily. Classic translation factor GTPase family. EF-G/EF-2 subfamily.

It localises to the cytoplasm. In terms of biological role, catalyzes the GTP-dependent ribosomal translocation step during translation elongation. During this step, the ribosome changes from the pre-translocational (PRE) to the post-translocational (POST) state as the newly formed A-site-bound peptidyl-tRNA and P-site-bound deacylated tRNA move to the P and E sites, respectively. Catalyzes the coordinated movement of the two tRNA molecules, the mRNA and conformational changes in the ribosome. The chain is Elongation factor G from Mycoplasma mycoides subsp. mycoides SC (strain CCUG 32753 / NCTC 10114 / PG1).